Reading from the N-terminus, the 102-residue chain is ATP-dependent Clp protease adapter protein ClpS (102 aa).

This sequence belongs to the ClpS family. In terms of assembly, binds to the N-terminal domain of the chaperone ClpA.

In terms of biological role, involved in the modulation of the specificity of the ClpAP-mediated ATP-dependent protein degradation. The sequence is that of ATP-dependent Clp protease adapter protein ClpS from Shewanella oneidensis (strain ATCC 700550 / JCM 31522 / CIP 106686 / LMG 19005 / NCIMB 14063 / MR-1).